The primary structure comprises 507 residues: Glutamate--tRNA ligase (507 aa).

Positions 14–24 (PSPTGPLHIGG) match the 'HIGH' region motif. The short motif at 262 to 266 (KLSKR) is the 'KMSKS' region element. K265 contacts ATP.

Belongs to the class-I aminoacyl-tRNA synthetase family. Glutamate--tRNA ligase type 1 subfamily. In terms of assembly, monomer.

It localises to the cytoplasm. The catalysed reaction is tRNA(Glu) + L-glutamate + ATP = L-glutamyl-tRNA(Glu) + AMP + diphosphate. Its function is as follows. Catalyzes the attachment of glutamate to tRNA(Glu) in a two-step reaction: glutamate is first activated by ATP to form Glu-AMP and then transferred to the acceptor end of tRNA(Glu). The protein is Glutamate--tRNA ligase of Porphyromonas gingivalis (strain ATCC 33277 / DSM 20709 / CIP 103683 / JCM 12257 / NCTC 11834 / 2561).